The sequence spans 387 residues: Protein PHYTOCHROME KINASE SUBSTRATE 3 (387 aa).

Disordered regions lie at residues 1 to 21, 74 to 128, and 242 to 271; these read MDAE…PQLL, HEKE…CNSQ, and LSTK…ASVA. Polar residues predominate over residues 12-21; it reads QISSYKPQLL. A compositionally biased stretch (basic and acidic residues) spans 74–83; sequence HEKENTHDHP. Polar residues predominate over residues 114–128; sequence HGTPSVRSESSCNSQ. Residues 242-261 show a composition bias toward low complexity; that stretch reads LSTKNNNHNNNGNNSSMSSN.

Belongs to the PKS family.

Functionally, probably involved in the phytochrome signaling pathway. The chain is Protein PHYTOCHROME KINASE SUBSTRATE 3 (PKS3) from Arabidopsis thaliana (Mouse-ear cress).